A 238-amino-acid chain; its full sequence is Doublecortin domain-containing protein (238 aa).

The tract at residues 82 to 112 is partial p25alpha domain; sequence VFERLNDKQFYTGVQKTKFMELLKNNKNKSS. The 82-residue stretch at 151–232 folds into the Doublecortin domain; that stretch reads KTIFLFNNEK…GDPPAPIRNL (82 aa).

As to quaternary structure, interacts with alpha-tubulin 1 and beta-tubulin; the interaction stabilizes microtubule assembly.

The protein resides in the cytoplasm. Its subcellular location is the cytoskeleton. In terms of biological role, involved in the stabilization of microtubules. Probably by controlling microtubules stabilization, plays a role in invasion, microneme secretion and parasite growth in host erythrocytes. The chain is Doublecortin domain-containing protein from Plasmodium falciparum (isolate 3D7).